Here is a 199-residue protein sequence, read N- to C-terminus: MVKIGVCGPVGSGKTALIEALTRHMSKDYDMAVITNDIYTKEDAEFMCKNSVMPRERIIGVETGGCPHTAIREDASMNLEAVEEMHGRFPNLELLLIESGGDNLSATFNPELADFTIFVIDVAEGDKIPRKGGPGITRSDLLVINKIDLAPYVGADLKVMERDSKKMRGEKPFIFTNIRAKEGLDDVIAWIKRNALLED.

Position 8-15 (8-15) interacts with GTP; the sequence is GPVGSGKT.

It belongs to the SIMIBI class G3E GTPase family. UreG subfamily. As to quaternary structure, homodimer. UreH, UreF and UreG form a complex that acts as a GTP-hydrolysis-dependent molecular chaperone, activating the urease apoprotein by helping to assemble the nickel containing metallocenter of UreC. The UreE protein probably delivers the nickel.

Its subcellular location is the cytoplasm. Facilitates the functional incorporation of the urease nickel metallocenter. This process requires GTP hydrolysis, probably effectuated by UreG. This chain is Urease accessory protein UreG, found in Helicobacter pylori (strain G27).